The primary structure comprises 118 residues: Vitelline membrane protein Vm32E (118 aa).

A signal peptide spans 1 to 17 (MKIVALTLVAFVALAGA). The VM domain occupies 36–75 (GYPAPPCPTNYLFSCQPNLAPAPCAQEAQAPAYGSAGAYT).

Belongs to the vitelline membrane family.

It localises to the secreted. Major early eggshell protein. The protein is Vitelline membrane protein Vm32E of Drosophila sechellia (Fruit fly).